Here is a 289-residue protein sequence, read N- to C-terminus: ATP synthase subunit a (289 aa).

Helical transmembrane passes span 43 to 63, 101 to 121, 160 to 180, 193 to 213, 232 to 252, and 259 to 279; these read AFHV…VLIF, SAVI…MNAV, LSVF…GGFI, IFVQ…TLIA, VFIL…GLGI, and AVFH…LTIV.

It belongs to the ATPase A chain family. As to quaternary structure, F-type ATPases have 2 components, CF(1) - the catalytic core - and CF(0) - the membrane proton channel. CF(1) has five subunits: alpha(3), beta(3), gamma(1), delta(1), epsilon(1). CF(0) has three main subunits: a(1), b(2) and c(9-12). The alpha and beta chains form an alternating ring which encloses part of the gamma chain. CF(1) is attached to CF(0) by a central stalk formed by the gamma and epsilon chains, while a peripheral stalk is formed by the delta and b chains.

The protein resides in the cell inner membrane. Key component of the proton channel; it plays a direct role in the translocation of protons across the membrane. The polypeptide is ATP synthase subunit a (Pseudomonas syringae pv. tomato (strain ATCC BAA-871 / DC3000)).